The chain runs to 527 residues: Estrogen receptor beta (527 aa).

Residues 1-145 (MDVKNSPSSL…SPSSKRDAHF (145 aa)) form a modulating region. Residues S84 and S102 each carry the phosphoserine; by MAPK modification. 2 consecutive NR C4-type zinc fingers follow at residues 146–166 (CAVC…CEGC) and 182–206 (CPAT…LRKC). The segment at residues 146–211 (CAVCSDYASG…RLRKCYEVGM (66 aa)) is a DNA-binding region (nuclear receptor). In terms of domain architecture, NR LBD spans 261–495 (SPEQLVLTLL…DLLLEMLNAH (235 aa)).

The protein belongs to the nuclear hormone receptor family. NR3 subfamily. As to quaternary structure, binds DNA as a homodimer. Can form a heterodimer with ESR1. Interacts with NCOA1, NCOA3, NCOA5 and NCOA6 coactivators, leading to a strong increase of transcription of target genes. Interacts with UBE1C and AKAP13. Interacts with DNTTIP2. Interacts with CCDC62 in the presence of estradiol/E2; this interaction seems to enhance the transcription of target genes. Interacts with DNAAF4. Interacts with PRMT2. Interacts with CCAR2 (via N-terminus) in a ligand-independent manner. Interacts with RBM39, in the presence of estradiol (E2). Interacts with STUB1/CHIP. In terms of processing, phosphorylation at Ser-84 and Ser-102 recruits NCOA1. As to expression, present in granulosa cells of antral follicles in various stages of follicular growth.

It is found in the nucleus. In terms of biological role, nuclear hormone receptor. Binds estrogens with an affinity similar to that of ESR1ESR1/ER-alpha, and activates expression of reporter genes containing estrogen response elements (ERE) in an estrogen-dependent manner. The sequence is that of Estrogen receptor beta (ESR2) from Bos taurus (Bovine).